Reading from the N-terminus, the 472-residue chain is Poly(A) polymerase catalytic subunit (472 aa).

Residues D191 and D193 contribute to the active site.

Belongs to the poxviridae poly(A) polymerase catalytic subunit family. In terms of assembly, heterodimer of a large (catalytic) subunit and a small (regulatory) subunit.

It carries out the reaction RNA(n) + ATP = RNA(n)-3'-adenine ribonucleotide + diphosphate. In terms of biological role, polymerase that creates the 3'-poly(A) tail of mRNA's. This chain is Poly(A) polymerase catalytic subunit (PAPL), found in Capra hircus (Goat).